The primary structure comprises 247 residues: Triosephosphate isomerase (247 aa).

9-11 (NWK) contributes to the substrate binding site. The Electrophile role is filled by H93. Catalysis depends on E163, which acts as the Proton acceptor. Residues G169, S209, and 230 to 231 (GG) each bind substrate.

Belongs to the triosephosphate isomerase family. Homodimer.

The protein localises to the cytoplasm. The enzyme catalyses D-glyceraldehyde 3-phosphate = dihydroxyacetone phosphate. Its pathway is carbohydrate biosynthesis; gluconeogenesis. The protein operates within carbohydrate degradation; glycolysis; D-glyceraldehyde 3-phosphate from glycerone phosphate: step 1/1. In terms of biological role, involved in the gluconeogenesis. Catalyzes stereospecifically the conversion of dihydroxyacetone phosphate (DHAP) to D-glyceraldehyde-3-phosphate (G3P). This is Triosephosphate isomerase from Dinoroseobacter shibae (strain DSM 16493 / NCIMB 14021 / DFL 12).